Here is a 112-residue protein sequence, read N- to C-terminus: UstYa family oxidase VicYb (112 aa).

2 short sequence motifs (HXXHC) span residues 9–13 and 36–40; these read HYLHC and HLDHC.

The protein belongs to the ustYa family.

The protein operates within mycotoxin biosynthesis. Its function is as follows. UstYa family oxidase, part of the gene cluster that mediates the biosynthesis of the secondary metabolite victorin, the molecular basis for Victoria blight of oats. Within the pathway, vicYb catalyzes the oxidative cyclization of the core peptide. The pathway starts with the processing of the precursor vicA1 by several endopeptidases including kexin proteases as well as the cluster-specific S28 family peptidases vicPa and vicPb to produce 7 identical copies of the hexapeptide Gly-Leu-Lys-Leu-Ala-Phe. After being excised from the precursor peptide, the core peptides are cyclized and modified post-translationally by enzymes encoded within the gene cluster. The ustYa family oxidase vicYb is required for the formation of the macrocycle in victorin and the copper amine oxidases (CAOs) vicK1 and vicK2 are responsible for converting victorin to the active form by oxidizing the N-terminal glycyl residue in the peptides to glyoxylate. Relaxed substrate specificity of enzymes in the victorin biosynthetic pathway results in a metabolic grid that produces a set of analogs including victorinines B, C, E or HV-toxin M. The polypeptide is UstYa family oxidase VicYb (Bipolaris victoriae (strain FI3) (Victoria blight of oats agent)).